Reading from the N-terminus, the 865-residue chain is Bifunctional uridylyltransferase/uridylyl-removing enzyme (865 aa).

The segment at 1–318 (MPHVDLNPLK…FPRPDSDARL (318 aa)) is uridylyltransferase. A uridylyl-removing region spans residues 319 to 675 (IDDDFRNLRE…VRPTEHGEGL (357 aa)). In terms of domain architecture, HD spans 437 to 559 (VDQHTLAVVR…VGDERRLAAL (123 aa)). ACT domains follow at residues 676-762 (QVMV…RLPH) and 789-865 (RLSV…QQAA). Positions 747–767 (DPHAARHAHAPRRLPHSHARR) are disordered. The span at 751–767 (ARHAHAPRRLPHSHARR) shows a compositional bias: basic residues.

This sequence belongs to the GlnD family. It depends on Mg(2+) as a cofactor.

The enzyme catalyses [protein-PII]-L-tyrosine + UTP = [protein-PII]-uridylyl-L-tyrosine + diphosphate. The catalysed reaction is [protein-PII]-uridylyl-L-tyrosine + H2O = [protein-PII]-L-tyrosine + UMP + H(+). With respect to regulation, uridylyltransferase (UTase) activity is inhibited by glutamine, while glutamine activates uridylyl-removing (UR) activity. Its function is as follows. Modifies, by uridylylation and deuridylylation, the PII regulatory proteins (GlnB and homologs), in response to the nitrogen status of the cell that GlnD senses through the glutamine level. Under low glutamine levels, catalyzes the conversion of the PII proteins and UTP to PII-UMP and PPi, while under higher glutamine levels, GlnD hydrolyzes PII-UMP to PII and UMP (deuridylylation). Thus, controls uridylylation state and activity of the PII proteins, and plays an important role in the regulation of nitrogen assimilation and metabolism. The polypeptide is Bifunctional uridylyltransferase/uridylyl-removing enzyme (Bordetella pertussis (strain Tohama I / ATCC BAA-589 / NCTC 13251)).